We begin with the raw amino-acid sequence, 252 residues long: UPF0273 protein MK0039 (252 aa).

In terms of domain architecture, KaiC spans E4–R248. G31–T38 serves as a coordination point for ATP.

This sequence belongs to the UPF0273 family.

The polypeptide is UPF0273 protein MK0039 (Methanopyrus kandleri (strain AV19 / DSM 6324 / JCM 9639 / NBRC 100938)).